The sequence spans 434 residues: Histidinol dehydrogenase (434 aa).

3 residues coordinate NAD(+): Tyr130, Gln191, and Asn214. Residues Ser237, Gln259, and His262 each contribute to the substrate site. Residues Gln259 and His262 each coordinate Zn(2+). Active-site proton acceptor residues include Glu328 and His329. 4 residues coordinate substrate: His329, Asp362, Glu416, and His421. Asp362 provides a ligand contact to Zn(2+). His421 contributes to the Zn(2+) binding site.

Belongs to the histidinol dehydrogenase family. Zn(2+) serves as cofactor.

The enzyme catalyses L-histidinol + 2 NAD(+) + H2O = L-histidine + 2 NADH + 3 H(+). It functions in the pathway amino-acid biosynthesis; L-histidine biosynthesis; L-histidine from 5-phospho-alpha-D-ribose 1-diphosphate: step 9/9. Its function is as follows. Catalyzes the sequential NAD-dependent oxidations of L-histidinol to L-histidinaldehyde and then to L-histidine. This chain is Histidinol dehydrogenase, found in Rhodospirillum rubrum (strain ATCC 11170 / ATH 1.1.1 / DSM 467 / LMG 4362 / NCIMB 8255 / S1).